A 291-amino-acid chain; its full sequence is ATP synthase gamma chain (291 aa).

It belongs to the ATPase gamma chain family. As to quaternary structure, F-type ATPases have 2 components, CF(1) - the catalytic core - and CF(0) - the membrane proton channel. CF(1) has five subunits: alpha(3), beta(3), gamma(1), delta(1), epsilon(1). CF(0) has three main subunits: a, b and c.

It localises to the cell membrane. Produces ATP from ADP in the presence of a proton gradient across the membrane. The gamma chain is believed to be important in regulating ATPase activity and the flow of protons through the CF(0) complex. This chain is ATP synthase gamma chain, found in Buchnera aphidicola subsp. Schizaphis graminum (strain Sg).